We begin with the raw amino-acid sequence, 284 residues long: 4-diphosphocytidyl-2-C-methyl-D-erythritol kinase (284 aa).

Lysine 14 is an active-site residue. Position 98 to 108 (98 to 108 (PMGGGLGGGSS)) interacts with ATP. Residue aspartate 140 is part of the active site.

This sequence belongs to the GHMP kinase family. IspE subfamily.

The enzyme catalyses 4-CDP-2-C-methyl-D-erythritol + ATP = 4-CDP-2-C-methyl-D-erythritol 2-phosphate + ADP + H(+). It participates in isoprenoid biosynthesis; isopentenyl diphosphate biosynthesis via DXP pathway; isopentenyl diphosphate from 1-deoxy-D-xylulose 5-phosphate: step 3/6. Functionally, catalyzes the phosphorylation of the position 2 hydroxy group of 4-diphosphocytidyl-2C-methyl-D-erythritol. This Shewanella putrefaciens (strain CN-32 / ATCC BAA-453) protein is 4-diphosphocytidyl-2-C-methyl-D-erythritol kinase.